A 154-amino-acid chain; its full sequence is Myoglobin (154 aa).

Residues 2 to 148 (VLSDAEWQLV…FRKDIAAKYK (147 aa)) form the Globin domain. Ser4 is subject to Phosphoserine. His65 serves as a coordination point for nitrite. Position 65 (His65) interacts with O2. The residue at position 68 (Thr68) is a Phosphothreonine. Residue His94 participates in heme b binding.

Belongs to the globin family. As to quaternary structure, monomeric.

The protein localises to the cytoplasm. Its subcellular location is the sarcoplasm. The enzyme catalyses Fe(III)-heme b-[protein] + nitric oxide + H2O = Fe(II)-heme b-[protein] + nitrite + 2 H(+). The catalysed reaction is H2O2 + AH2 = A + 2 H2O. In terms of biological role, monomeric heme protein which primary function is to store oxygen and facilitate its diffusion within muscle tissues. Reversibly binds oxygen through a pentacoordinated heme iron and enables its timely and efficient release as needed during periods of heightened demand. Depending on the oxidative conditions of tissues and cells, and in addition to its ability to bind oxygen, it also has a nitrite reductase activity whereby it regulates the production of bioactive nitric oxide. Under stress conditions, like hypoxia and anoxia, it also protects cells against reactive oxygen species thanks to its pseudoperoxidase activity. The polypeptide is Myoglobin (MB) (Megaptera novaeangliae (Humpback whale)).